The following is a 261-amino-acid chain: (R)-S-adenosyl-L-methionine hydrolase (261 aa).

Residues Asp-12, Asp-72, and Asn-187 each contribute to the adenosine site. (R)-S-adenosyl-L-methionine contacts are provided by Asn-187, Ser-231, and Val-239. Val-239 contributes to the adenosine binding site.

This sequence belongs to the SAM hydrolase / SAM-dependent halogenase family.

It catalyses the reaction (R)-S-adenosyl-L-methionine + H2O = adenosine + L-methionine + H(+). With respect to regulation, activity is inhibited by chloride. Its function is as follows. Catalyzes the hydrolysis of S-adenosyl-L-methionine (SAM) into adenosine and L-methionine. Is likely stereoselective, specifically hydrolyzing (R)-S-adenosyl-L-methionine ((R)-SAM), the inactive form of the ubiquitous cofactor SAM, and not the active form of SAM, (S)-S-adenosyl-L-methionine. Probaly plays a role in preventing accumulation of (R)-S-adenosyl-L-methionine in cells; maintenance of (S)-S-denosyl-L-methionine homochirality is important for cellular health given that the (R)-form is largely inactive as a methyl donor and can function as an inhibitor of methyltransferases. Shows very slow iodinase activity in vitro. The sequence is that of (R)-S-adenosyl-L-methionine hydrolase from Salinispora arenicola (strain CNS-205).